The chain runs to 152 residues: MFSGASAINLDTKGRIAIPKRYREPLHACHNSQLVITVDIQSSCLLLYPIQEWEKVAAKLALLSDTQPTERAIKRMLLGYAHECELDGNGRMLLPTPLRQYANLDKRAMLVGQLNKFELWDEAAWQQQIEQSRLAILNEDLAANERLADFSL.

SpoVT-AbrB domains follow at residues 5 to 52 and 81 to 124; these read ASAI…PIQE and AHEC…DEAA.

The protein belongs to the MraZ family. As to quaternary structure, forms oligomers.

The protein localises to the cytoplasm. The protein resides in the nucleoid. This chain is Transcriptional regulator MraZ, found in Shewanella halifaxensis (strain HAW-EB4).